A 205-amino-acid chain; its full sequence is Small ribosomal subunit protein uS4 (205 aa).

The interval 19–45 is disordered; sequence IWGRPKSPVNRREYGPGQHGQRRKGKL. An S4 RNA-binding domain is found at 94–157; it reads SRLDAVVYRA…KQLAIVLEAV (64 aa).

It belongs to the universal ribosomal protein uS4 family. Part of the 30S ribosomal subunit. Contacts protein S5. The interaction surface between S4 and S5 is involved in control of translational fidelity.

Functionally, one of the primary rRNA binding proteins, it binds directly to 16S rRNA where it nucleates assembly of the body of the 30S subunit. Its function is as follows. With S5 and S12 plays an important role in translational accuracy. The sequence is that of Small ribosomal subunit protein uS4 from Brucella melitensis biotype 2 (strain ATCC 23457).